Consider the following 281-residue polypeptide: Putative integrase/recombinase y4rD (281 aa).

One can recognise a Core-binding (CB) domain in the interval L5–A98. The Tyr recombinase domain occupies E122–V281. Catalysis depends on residues R162, K188, H262, and R265.

Belongs to the 'phage' integrase family.

Functionally, seems to be non-functional. The polypeptide is Putative integrase/recombinase y4rD (Sinorhizobium fredii (strain NBRC 101917 / NGR234)).